The primary structure comprises 173 residues: Pathogenesis-related protein 1A/1B (173 aa).

Residues 1-20 (MSTSAVLFLLLAVFAAGASA) form the signal peptide.

It belongs to the thaumatin family.

In Hordeum vulgare (Barley), this protein is Pathogenesis-related protein 1A/1B.